Consider the following 76-residue polypeptide: UPF0154 protein LCA_1273 (76 aa).

Residues 3-23 (IGIGVLIFVIGALLGAVAGFF) traverse the membrane as a helical segment. The segment at 55 to 76 (PSEKKLNQMMSSMKAQQKRSKK) is disordered.

This sequence belongs to the UPF0154 family.

It localises to the cell membrane. The polypeptide is UPF0154 protein LCA_1273 (Latilactobacillus sakei subsp. sakei (strain 23K) (Lactobacillus sakei subsp. sakei)).